The sequence spans 520 residues: Hydroxymethylglutaryl-CoA synthase, cytoplasmic (520 aa).

Phosphoserine is present on Ser4. (3S)-3-hydroxy-3-methylglutaryl-CoA-binding residues include Asp43 and Ala44. A CoA-binding site is contributed by 44-46; that stretch reads AGK. N6-acetyllysine is present on Lys46. Catalysis depends on Glu95, which acts as the Proton donor/acceptor. Positions 129, 167, 171, 221, and 264 each coordinate (3S)-3-hydroxy-3-methylglutaryl-CoA. The Acyl-thioester intermediate role is filled by Cys129. Asn167 is a CoA binding site. A CoA-binding site is contributed by Ser221. Catalysis depends on His264, which acts as the Proton donor/acceptor. CoA-binding residues include Lys269 and Lys273. Residues Lys273, Asn343, and Ser377 each contribute to the (3S)-3-hydroxy-3-methylglutaryl-CoA site. Lys273 carries the post-translational modification N6-acetyllysine. Residues 487 to 520 are disordered; it reads NTATEHIPSPAKKVPRLPATSGEPESAVISNGEH. Phosphoserine occurs at positions 495 and 516.

It belongs to the thiolase-like superfamily. HMG-CoA synthase family. As to quaternary structure, homodimer.

The protein resides in the cytoplasm. The enzyme catalyses acetoacetyl-CoA + acetyl-CoA + H2O = (3S)-3-hydroxy-3-methylglutaryl-CoA + CoA + H(+). The protein operates within metabolic intermediate biosynthesis; (R)-mevalonate biosynthesis; (R)-mevalonate from acetyl-CoA: step 2/3. Its function is as follows. Catalyzes the condensation of acetyl-CoA with acetoacetyl-CoA to form HMG-CoA, which is converted by HMG-CoA reductase (HMGCR) into mevalonate, a precursor for cholesterol synthesis. The polypeptide is Hydroxymethylglutaryl-CoA synthase, cytoplasmic (Rattus norvegicus (Rat)).